A 214-amino-acid chain; its full sequence is Pyridoxine/pyridoxamine 5'-phosphate oxidase (214 aa).

Residues 9 to 12 (RKNY) and lysine 67 contribute to the substrate site. FMN contacts are provided by residues 62 to 67 (RIVLLK), 77 to 78 (YT), lysine 83, lysine 84, and glutamine 106. 3 residues coordinate substrate: tyrosine 124, arginine 128, and serine 132. FMN-binding positions include 141-142 (QS) and tryptophan 186. 192 to 194 (RLH) serves as a coordination point for substrate. FMN is bound at residue arginine 196.

Belongs to the pyridoxamine 5'-phosphate oxidase family. Homodimer. It depends on FMN as a cofactor.

The catalysed reaction is pyridoxamine 5'-phosphate + O2 + H2O = pyridoxal 5'-phosphate + H2O2 + NH4(+). The enzyme catalyses pyridoxine 5'-phosphate + O2 = pyridoxal 5'-phosphate + H2O2. The protein operates within cofactor metabolism; pyridoxal 5'-phosphate salvage; pyridoxal 5'-phosphate from pyridoxamine 5'-phosphate: step 1/1. It functions in the pathway cofactor metabolism; pyridoxal 5'-phosphate salvage; pyridoxal 5'-phosphate from pyridoxine 5'-phosphate: step 1/1. In terms of biological role, catalyzes the oxidation of either pyridoxine 5'-phosphate (PNP) or pyridoxamine 5'-phosphate (PMP) into pyridoxal 5'-phosphate (PLP). The sequence is that of Pyridoxine/pyridoxamine 5'-phosphate oxidase from Leptospira borgpetersenii serovar Hardjo-bovis (strain JB197).